Reading from the N-terminus, the 398-residue chain is MTTYNLSKKSEIWKEIPIEGFEKYMVSNFGNVKNINTDKILSQSNRGGYFSVYLKPKDIDAQQKKIHRLVALTFVKNKDPENKKVVNHINGDKLDNRAENLEWVTASENVQHAVDNNLITMTKRAVIQCNLKTGKKIKEFESVTDASNETGISTGHICDAANGKWKQAGGYAWKYSKKDSAKIDIDMSKFKQLVDFPNYLINNEGQVYSLARKRFMKPIHRGDSGMNISLSEGDKQKTMLVHKLVASYFLKKNNDDHNHVRHKDGNRQNNNVSNLEWCYLGGMDKHKPESHFSHDYYDEKTAIPLTERKKAVKTIKSSGSKTSKSIGSKTNKSAGSKTASKLGSKTAIKSGSKTTSKISTKSGSKTAIKSGSKTASKISTKSGSKTSKTSKSIKYYEV.

The disordered stretch occupies residues 313-398; that stretch reads KTIKSSGSKT…TSKSIKYYEV (86 aa). Composition is skewed to low complexity over residues 314-333 and 343-398; these read TIKS…TNKS and GSKT…YYEV.

This is an uncharacterized protein from Acanthamoeba polyphaga mimivirus (APMV).